Here is a 140-residue protein sequence, read N- to C-terminus: Transcription antitermination protein NusB (140 aa).

The protein belongs to the NusB family.

In terms of biological role, involved in transcription antitermination. Required for transcription of ribosomal RNA (rRNA) genes. Binds specifically to the boxA antiterminator sequence of the ribosomal RNA (rrn) operons. The sequence is that of Transcription antitermination protein NusB from Thermoanaerobacter pseudethanolicus (strain ATCC 33223 / 39E) (Clostridium thermohydrosulfuricum).